A 665-amino-acid polypeptide reads, in one-letter code: Mitochondrial Rho GTPase 1 (665 aa).

The Cytoplasmic segment spans residues 1–634; it reads MTNDVIRIVV…NQDPEEETNT (634 aa). Positions 3 to 177 constitute a Miro 1 domain; sequence NDVIRIVVCG…FYLCQKAVMH (175 aa). GTP contacts are provided by residues 12-19, 61-67, and 119-122; these read GDEGVGKS, DTQFSNS, and NVFD. 2 consecutive EF-hand domains span residues 193–228 and 313–348; these read NAVA…CFGR and EGYR…TPGI. Ca(2+) is bound by residues Asp-206, Asp-208, Asp-210, Tyr-212, Glu-217, Asp-326, Asp-328, Asp-330, and Glu-337. In terms of domain architecture, Miro 2 spans 452 to 618; it reads RSVFNCFVLG…FIQLAEAAQQ (167 aa). Residues 461–468, 498–502, and 567–570 contribute to the GTP site; these read GSHMSGKT, EMTGG, and LKAD. A helical; Anchor for type IV membrane protein transmembrane segment spans residues 635–655; sequence IMPFALAGGATVLLAAAVAWI. The Mitochondrial intermembrane portion of the chain corresponds to 656–665; it reads FKNVRVAGRE.

Belongs to the mitochondrial Rho GTPase family.

Its subcellular location is the mitochondrion outer membrane. Its function is as follows. Mitochondrial GTPase involved in mitochondrial trafficking. Probably involved in control of anterograde transport of mitochondria and their subcellular distribution. The polypeptide is Mitochondrial Rho GTPase 1 (GEM1) (Yarrowia lipolytica (strain CLIB 122 / E 150) (Yeast)).